The sequence spans 226 residues: 3-dehydroquinate dehydratase (226 aa).

3-dehydroquinate-binding positions include 29 to 31 (EFR) and Arg-56. Catalysis depends on His-120, which acts as the Proton donor/acceptor. Lys-146 serves as the catalytic Schiff-base intermediate with substrate. Residues Arg-187, Thr-208, and Gln-212 each coordinate 3-dehydroquinate.

It belongs to the type-I 3-dehydroquinase family. As to quaternary structure, homodimer.

It catalyses the reaction 3-dehydroquinate = 3-dehydroshikimate + H2O. The protein operates within metabolic intermediate biosynthesis; chorismate biosynthesis; chorismate from D-erythrose 4-phosphate and phosphoenolpyruvate: step 3/7. Its function is as follows. Involved in the third step of the chorismate pathway, which leads to the biosynthesis of aromatic amino acids. Catalyzes the cis-dehydration of 3-dehydroquinate (DHQ) and introduces the first double bond of the aromatic ring to yield 3-dehydroshikimate. The polypeptide is 3-dehydroquinate dehydratase (Halobacterium salinarum (strain ATCC 700922 / JCM 11081 / NRC-1) (Halobacterium halobium)).